Here is a 638-residue protein sequence, read N- to C-terminus: Homeobox protein 10 (638 aa).

Disordered stretches follow at residues 23–55, 76–139, and 195–219; these read ETQP…LNTN, TDEN…VNTN, and IANE…EEAK. Composition is skewed to low complexity over residues 24-55 and 80-139; these read TQPT…LNTN and NTSV…VNTN. Residues 205-214 are compositionally biased toward polar residues; it reads EPQTNSNVNG. The segment at residues 301-360 is a DNA-binding region (homeobox); it reads NKKKRQRTSPEQLAILEQIFETDKMPSQQIRVRLANQLGMSSRRVQIWFQNKRAKVKRGG. Disordered regions lie at residues 381-431 and 448-638; these read EDED…TSSD and SSSS…IVKN. Low complexity-rich tracts occupy residues 388 to 411, 419 to 430, and 462 to 501; these read SLTI…NNNG, LSSSPTNLNTSS, and NNTN…TTTT. 2 stretches are compositionally biased toward polar residues: residues 502 to 522 and 545 to 573; these read SSSP…NKLT and SLNS…TDKQ. Low complexity predominate over residues 575–625; the sequence is NSDFSNFNNNNNNNNNNNNNNNNNNNINNNGNNNSNNNDSNNNNNKSNFSD.

It localises to the nucleus. Putative transcription factor. The chain is Homeobox protein 10 (hbx10) from Dictyostelium discoideum (Social amoeba).